Reading from the N-terminus, the 291-residue chain is Undecaprenyl-diphosphatase (291 aa).

8 helical membrane-spanning segments follow: residues 1–21 (MFIIELIKGIILGIVEGLTEF), 48–68 (SAFTFKIVIQLGSVFAAAWVF), 102–122 (LHVLVGMVPAGILGLLFDDFI), 126–146 (LFSVPTVMIGLFVGAIYMIIA), 162–182 (ISYFQAFVIGISQAVAMWPGF), 203–223 (SDFTFIMAVPIMLAASGLSLL), 231–251 (IADIPFYILGFLAAFTVGLIA), and 267–287 (FAIYRIVLVIFIAILYFGFGI).

It belongs to the UppP family.

Its subcellular location is the cell membrane. The catalysed reaction is di-trans,octa-cis-undecaprenyl diphosphate + H2O = di-trans,octa-cis-undecaprenyl phosphate + phosphate + H(+). In terms of biological role, catalyzes the dephosphorylation of undecaprenyl diphosphate (UPP). Confers resistance to bacitracin. The polypeptide is Undecaprenyl-diphosphatase (Staphylococcus aureus (strain MRSA252)).